A 486-amino-acid chain; its full sequence is Bifunctional protein HldE (486 aa).

The tract at residues 1–329 (MSSRLSGLLD…AALSVAGPVG (329 aa)) is ribokinase. Residue 204–207 (NAFE) participates in ATP binding. Aspartate 274 is an active-site residue. A cytidylyltransferase region spans residues 355-486 (FTNGCFDILH…AIIARSETGK (132 aa)).

It in the N-terminal section; belongs to the carbohydrate kinase PfkB family. In the C-terminal section; belongs to the cytidylyltransferase family. In terms of assembly, homodimer.

The catalysed reaction is D-glycero-beta-D-manno-heptose 7-phosphate + ATP = D-glycero-beta-D-manno-heptose 1,7-bisphosphate + ADP + H(+). The enzyme catalyses D-glycero-beta-D-manno-heptose 1-phosphate + ATP + H(+) = ADP-D-glycero-beta-D-manno-heptose + diphosphate. Its pathway is nucleotide-sugar biosynthesis; ADP-L-glycero-beta-D-manno-heptose biosynthesis; ADP-L-glycero-beta-D-manno-heptose from D-glycero-beta-D-manno-heptose 7-phosphate: step 1/4. It participates in nucleotide-sugar biosynthesis; ADP-L-glycero-beta-D-manno-heptose biosynthesis; ADP-L-glycero-beta-D-manno-heptose from D-glycero-beta-D-manno-heptose 7-phosphate: step 3/4. Its function is as follows. Catalyzes the phosphorylation of D-glycero-D-manno-heptose 7-phosphate at the C-1 position to selectively form D-glycero-beta-D-manno-heptose-1,7-bisphosphate. In terms of biological role, catalyzes the ADP transfer from ATP to D-glycero-beta-D-manno-heptose 1-phosphate, yielding ADP-D-glycero-beta-D-manno-heptose. This chain is Bifunctional protein HldE, found in Hyphomonas neptunium (strain ATCC 15444).